The primary structure comprises 115 residues: NADH-ubiquinone oxidoreductase chain 3 (115 aa).

3 helical membrane-spanning segments follow: residues 3–23 (LVMA…IAFW), 55–75 (FFLV…LLPL), and 86–106 (TMLI…AYEW).

This sequence belongs to the complex I subunit 3 family. In terms of assembly, core subunit of respiratory chain NADH dehydrogenase (Complex I) which is composed of 45 different subunits. Interacts with TMEM186. Interacts with TMEM242.

The protein resides in the mitochondrion inner membrane. It catalyses the reaction a ubiquinone + NADH + 5 H(+)(in) = a ubiquinol + NAD(+) + 4 H(+)(out). Functionally, core subunit of the mitochondrial membrane respiratory chain NADH dehydrogenase (Complex I) which catalyzes electron transfer from NADH through the respiratory chain, using ubiquinone as an electron acceptor. Essential for the catalytic activity of complex I. This chain is NADH-ubiquinone oxidoreductase chain 3, found in Hippopotamus amphibius (Hippopotamus).